The following is a 182-amino-acid chain: Transcription termination/antitermination protein NusG (182 aa).

It belongs to the NusG family.

Its function is as follows. Participates in transcription elongation, termination and antitermination. This chain is Transcription termination/antitermination protein NusG, found in Chlamydia pneumoniae (Chlamydophila pneumoniae).